Here is a 286-residue protein sequence, read N- to C-terminus: Diaminopimelate epimerase (286 aa).

Asparagine 22, glutamine 56, and asparagine 76 together coordinate substrate. The active-site Proton donor is cysteine 85. Residues 86–87, asparagine 169, asparagine 202, and 220–221 each bind substrate; these read GN and ER. The Proton acceptor role is filled by cysteine 229. Residue 230–231 participates in substrate binding; that stretch reads GS.

It belongs to the diaminopimelate epimerase family. As to quaternary structure, homodimer.

It localises to the cytoplasm. The catalysed reaction is (2S,6S)-2,6-diaminopimelate = meso-2,6-diaminopimelate. The protein operates within amino-acid biosynthesis; L-lysine biosynthesis via DAP pathway; DL-2,6-diaminopimelate from LL-2,6-diaminopimelate: step 1/1. Functionally, catalyzes the stereoinversion of LL-2,6-diaminopimelate (L,L-DAP) to meso-diaminopimelate (meso-DAP), a precursor of L-lysine and an essential component of the bacterial peptidoglycan. This is Diaminopimelate epimerase from Buchnera aphidicola subsp. Baizongia pistaciae (strain Bp).